The primary structure comprises 523 residues: Cyclin-dependent kinase 17 (523 aa).

Serine 9 is modified (phosphoserine). The segment at 31 to 55 (IEESSSKDNEPIVKNGRPPTSHSMH) is disordered. Phosphoserine is present on residues serine 80, serine 92, and serine 105. Positions 103–123 (MGSDGESDQASGTSSDEVQSP) are disordered. Over residues 110-123 (DQASGTSSDEVQSP) the composition is skewed to polar residues. Serine 137, serine 146, serine 165, and serine 180 each carry phosphoserine. The Protein kinase domain occupies 192 to 473 (YIKLEKLGEG…AEEAMKHVYF (282 aa)). ATP is bound by residues 198–206 (LGEGTYATV) and lysine 221. Aspartate 313 (proton acceptor) is an active-site residue.

Belongs to the protein kinase superfamily. CMGC Ser/Thr protein kinase family. CDC2/CDKX subfamily. As to quaternary structure, found in a complex containing CABLES1, CDK16 and TDRD7. Interacts with TDRD7. In terms of tissue distribution, brain specific. Within the brain it is concentrated in the neuronal layers of the hippocampus and olfactory bulb, which mostly consist of post-mitotic neurons.

It carries out the reaction L-seryl-[protein] + ATP = O-phospho-L-seryl-[protein] + ADP + H(+). The enzyme catalyses L-threonyl-[protein] + ATP = O-phospho-L-threonyl-[protein] + ADP + H(+). May play a role in terminally differentiated neurons. Has a Ser/Thr-phosphorylating activity for histone H1. The chain is Cyclin-dependent kinase 17 (Cdk17) from Rattus norvegicus (Rat).